We begin with the raw amino-acid sequence, 143 residues long: Large ribosomal subunit protein uL11 (143 aa).

Belongs to the universal ribosomal protein uL11 family. In terms of assembly, part of the ribosomal stalk of the 50S ribosomal subunit. Interacts with L10 and the large rRNA to form the base of the stalk. L10 forms an elongated spine to which L12 dimers bind in a sequential fashion forming a multimeric L10(L12)X complex. In terms of processing, one or more lysine residues are methylated.

Its function is as follows. Forms part of the ribosomal stalk which helps the ribosome interact with GTP-bound translation factors. This Rhizobium rhizogenes (strain K84 / ATCC BAA-868) (Agrobacterium radiobacter) protein is Large ribosomal subunit protein uL11.